The primary structure comprises 363 residues: Spermidine/putrescine import ATP-binding protein PotA (363 aa).

The region spanning 6 to 236 (LEIRNVTRRF…PRSRFVADFI (231 aa)) is the ABC transporter domain. 38–45 (GPSGCGKT) provides a ligand contact to ATP.

Belongs to the ABC transporter superfamily. Spermidine/putrescine importer (TC 3.A.1.11.1) family. As to quaternary structure, the complex is composed of two ATP-binding proteins (PotA), two transmembrane proteins (PotB and PotC) and a solute-binding protein (PotD).

Its subcellular location is the cell inner membrane. The catalysed reaction is ATP + H2O + polyamine-[polyamine-binding protein]Side 1 = ADP + phosphate + polyamineSide 2 + [polyamine-binding protein]Side 1.. Its function is as follows. Part of the ABC transporter complex PotABCD involved in spermidine/putrescine import. Responsible for energy coupling to the transport system. This is Spermidine/putrescine import ATP-binding protein PotA from Pseudomonas aeruginosa (strain UCBPP-PA14).